The following is a 366-amino-acid chain: Putative ankyrin repeat protein RBE_0601 (366 aa).

ANK repeat units lie at residues 39-68 (KHGTALNRAIKLKDEKIITELLAKKVDINE), 94-124 (LPDEYLYKAVHQGRLDLVQYFIEEKNFDVNT), 131-160 (HGGAILSIATMGEHIDVINYLLKNGAIASQ), 162-186 (VISAILKGNIEILEKLFEYGATAHD), 210-239 (KSSNSETKEDLSNYVETLKFLLEHGGNPNA), and 250-280 (IALSALMDEPKNDTYKDICKLLIQYGADTSK).

The polypeptide is Putative ankyrin repeat protein RBE_0601 (Rickettsia bellii (strain RML369-C)).